The primary structure comprises 231 residues: Ribonuclease 3 (231 aa).

The RNase III domain occupies Q5–G134. A Mg(2+)-binding site is contributed by E47. The active site involves D51. The Mg(2+) site is built by D120 and E123. E123 is an active-site residue. A DRBM domain is found at D160–P230.

The protein belongs to the ribonuclease III family. Homodimer. The cofactor is Mg(2+).

It localises to the cytoplasm. It carries out the reaction Endonucleolytic cleavage to 5'-phosphomonoester.. Functionally, digests double-stranded RNA. Involved in the processing of primary rRNA transcript to yield the immediate precursors to the large and small rRNAs (23S and 16S). Processes some mRNAs, and tRNAs when they are encoded in the rRNA operon. Processes pre-crRNA and tracrRNA of type II CRISPR loci if present in the organism. This is Ribonuclease 3 from Oenococcus oeni (strain ATCC BAA-331 / PSU-1).